A 614-amino-acid polypeptide reads, in one-letter code: Vitamin B12 transporter BtuB (614 aa).

Positions 1–20 (MIKKASLLTACSVTAFSAWA) are cleaved as a signal peptide. Positions 26–33 (DTLVVTAN) match the TonB box motif. The TBDR plug domain occupies 38-152 (PRSTVLAPTT…IGGVVNIITT (115 aa)). Cyanocob(III)alamin-binding positions include Leu83, Ser85, Asn92, and 110-111 (VS). The TBDR beta-barrel domain maps to 155 to 614 (EPGTEISAGW…EYTLSGSYTF (460 aa)). A run of 3 beta stranded transmembrane segments spans residues 158 to 165 (TEISAGWG), 169 to 178 (YQNYDVSTQQ), and 184 to 195 (TRVTLLGDYAHT). Asp199, Gln211, Asp213, and Asp215 together coordinate Ca(2+). 2 consecutive transmembrane segments (beta stranded) span residues 217–227 (FLSKTLYGALE) and 232–248 (DAWS…NRTN). Positions 249 and 250 each coordinate Ca(2+). Ala251 provides a ligand contact to cyanocob(III)alamin. Ca(2+) is bound at residue Asp261. The next 14 beta stranded transmembrane spans lie at 263-277 (RKLY…LRYN), 279-296 (ELIK…KDYN), 309-325 (TLDE…NNVI), 328-337 (HGSIGAGVDW), 353-369 (YDQR…QQVG), 371-381 (FTFEGAARNDD), 385-400 (FGRH…WEFI), 403-417 (YRFI…KAPN), 434-443 (KSKQWEGAFE), 449-458 (VNWRISGYRN), 473-490 (YYNE…TANF), 494-509 (PLTH…ARNA), 517-529 (RRAK…QLDW), and 535-550 (DWGI…YDKD). Residue Thr309 coordinates cyanocob(III)alamin. Arg517 serves as a coordination point for cyanocob(III)alamin. Tyr551 lines the cyanocob(III)alamin pocket. A run of 3 beta stranded transmembrane segments spans residues 558 to 572 (TVKM…LAVA), 585 to 596 (IANLFDKDYETV), and 602 to 614 (AGRE…SYTF). The TonB C-terminal box signature appears at 597-614 (YGYQTAGREYTLSGSYTF).

The protein belongs to the TonB-dependent receptor family. BtuB (TC 1.B.14.3.1) subfamily.

It localises to the cell outer membrane. Involved in the active translocation of vitamin B12 (cyanocobalamin) across the outer membrane to the periplasmic space. It derives its energy for transport by interacting with the trans-periplasmic membrane protein TonB. This Escherichia coli O139:H28 (strain E24377A / ETEC) protein is Vitamin B12 transporter BtuB.